We begin with the raw amino-acid sequence, 188 residues long: Elongation factor P (188 aa).

It belongs to the elongation factor P family.

It localises to the cytoplasm. Its pathway is protein biosynthesis; polypeptide chain elongation. Its function is as follows. Involved in peptide bond synthesis. Stimulates efficient translation and peptide-bond synthesis on native or reconstituted 70S ribosomes in vitro. Probably functions indirectly by altering the affinity of the ribosome for aminoacyl-tRNA, thus increasing their reactivity as acceptors for peptidyl transferase. This chain is Elongation factor P, found in Nitrobacter winogradskyi (strain ATCC 25391 / DSM 10237 / CIP 104748 / NCIMB 11846 / Nb-255).